We begin with the raw amino-acid sequence, 714 residues long: DNA ligase (714 aa).

Residues 40–44, 90–91, and E124 each bind NAD(+); these read DADYD and SL. Catalysis depends on K126, which acts as the N6-AMP-lysine intermediate. R147, E183, K304, and K328 together coordinate NAD(+). Zn(2+)-binding residues include C420, C423, C438, and C444. In terms of domain architecture, BRCT spans 634-714; sequence TRDSEVSGKT…EWAAIVAAAG (81 aa).

Belongs to the NAD-dependent DNA ligase family. LigA subfamily. Mg(2+) is required as a cofactor. Requires Mn(2+) as cofactor.

It carries out the reaction NAD(+) + (deoxyribonucleotide)n-3'-hydroxyl + 5'-phospho-(deoxyribonucleotide)m = (deoxyribonucleotide)n+m + AMP + beta-nicotinamide D-nucleotide.. In terms of biological role, DNA ligase that catalyzes the formation of phosphodiester linkages between 5'-phosphoryl and 3'-hydroxyl groups in double-stranded DNA using NAD as a coenzyme and as the energy source for the reaction. It is essential for DNA replication and repair of damaged DNA. This chain is DNA ligase, found in Sphingopyxis alaskensis (strain DSM 13593 / LMG 18877 / RB2256) (Sphingomonas alaskensis).